The following is a 429-amino-acid chain: Glutamate-1-semialdehyde 2,1-aminomutase 2 (429 aa).

N6-(pyridoxal phosphate)lysine is present on lysine 267.

Belongs to the class-III pyridoxal-phosphate-dependent aminotransferase family. HemL subfamily. Homodimer. Requires pyridoxal 5'-phosphate as cofactor.

It localises to the cytoplasm. The enzyme catalyses (S)-4-amino-5-oxopentanoate = 5-aminolevulinate. It functions in the pathway porphyrin-containing compound metabolism; protoporphyrin-IX biosynthesis; 5-aminolevulinate from L-glutamyl-tRNA(Glu): step 2/2. The protein is Glutamate-1-semialdehyde 2,1-aminomutase 2 of Brevibacillus brevis (strain 47 / JCM 6285 / NBRC 100599).